We begin with the raw amino-acid sequence, 764 residues long: Thyrotropin receptor (764 aa).

A signal peptide spans 1–20 (MRPADLLQLVLLLDLPRDLG). Over 21 to 413 (GMGCSSPPCE…EFNPCEDIMG (393 aa)) the chain is Extracellular. An intrachain disulfide couples Cys-31 to Cys-41. 3 N-linked (GlcNAc...) asparagine glycosylation sites follow: Asn-77, Asn-99, and Asn-113. LRR repeat units lie at residues 100–124 (LSKV…ALKE), 125–150 (LPLL…VYST), 152–174 (IFFI…AFQG), 176–199 (CNET…AFNG), 200–223 (TKLD…AFGG), 227–248 (GPSL…GLEH), and 250–271 (KELI…SFLH). N-linked (GlcNAc...) asparagine glycosylation is found at Asn-177 and Asn-198. The N-linked (GlcNAc...) asparagine glycan is linked to Asn-302. Sulfotyrosine is present on Tyr-385. Residues 414–441 (YKFLRIVVWFVSLLALLGNVFVLLILLT) traverse the membrane as a helical segment. Over 442–450 (SHYKLNVPR) the chain is Cytoplasmic. The chain crosses the membrane as a helical span at residues 451 to 473 (FLMCNLAFADFCMGMYLLLIASV). Over 474–494 (DLYTHSEYYNHAIDWQTGPGC) the chain is Extracellular. Cysteines 494 and 569 form a disulfide. Residues 495–517 (NTAGFFTVFASELSVYTLTVITL) form a helical membrane-spanning segment. The Cytoplasmic segment spans residues 518–537 (ERWYAITFAMRLDRKIRLRH). Residues 538–560 (ACAIMVGGWVCCFLLALLPLVGI) form a helical membrane-spanning segment. The Extracellular portion of the chain corresponds to 561–580 (SSYAKVSICLPMDTETPLAL). The helical transmembrane segment at 581-602 (AYIVFVLTLNIVAFVIVCCCYV) threads the bilayer. Over 603-625 (KIYITVRNPQYNPGDKDTKIAKR) the chain is Cytoplasmic. A helical membrane pass occupies residues 626–649 (MAVLIFTDFICMAPISFYALSAIL). Topologically, residues 650–660 (NKPLITVSNSK) are extracellular. A helical membrane pass occupies residues 661–682 (ILLVLFYPLNSCANPFLYAIFT). Residues 683 to 764 (KAFQRDVFIL…ISEEYMQTVL (82 aa)) lie on the Cytoplasmic side of the membrane. The PDZ-binding signature appears at 762 to 764 (TVL).

It belongs to the G-protein coupled receptor 1 family. FSH/LSH/TSH subfamily. As to quaternary structure, interacts with heterodimer GPHA2:GPHB5; this interaction stimulates cAMP production. Interacts (via the PDZ-binding motif) with SCRIB; regulates TSHR trafficking and function. Post-translationally, glycosylated. In terms of processing, sulfated. Sulfation on Tyr-385 plays a role in thyrotropin receptor binding and activation. In terms of tissue distribution, expressed in thyroide cells (at protein level). Expressed in the thyroid.

Its subcellular location is the cell membrane. The protein localises to the basolateral cell membrane. Receptor for the thyroid-stimulating hormone (TSH) or thyrotropin. Also acts as a receptor for the heterodimeric glycoprotein hormone (GPHA2:GPHB5) or thyrostimulin. The activity of this receptor is mediated by G proteins which activate adenylate cyclase. Plays a central role in controlling thyroid cell metabolism. The chain is Thyrotropin receptor (TSHR) from Homo sapiens (Human).